The primary structure comprises 209 residues: Thymidine kinase (209 aa).

ATP is bound by residues 9-16 (SAMNAGKT) and 88-91 (DEAQ). The active-site Proton acceptor is the E89.

It belongs to the thymidine kinase family. As to quaternary structure, homotetramer.

It is found in the cytoplasm. The catalysed reaction is thymidine + ATP = dTMP + ADP + H(+). The chain is Thymidine kinase from Xanthomonas axonopodis pv. citri (strain 306).